Here is a 202-residue protein sequence, read N- to C-terminus: uncharacterized protein (202 aa).

2 disordered regions span residues M1 to G32 and P46 to T95. Positions S47–S79 are enriched in low complexity.

This is an uncharacterized protein from Equus caballus (Horse).